We begin with the raw amino-acid sequence, 259 residues long: 5'-nucleotidase SurE (259 aa).

Residues D8, D9, S40, and N92 each contribute to the a divalent metal cation site.

It belongs to the SurE nucleotidase family. A divalent metal cation serves as cofactor.

Its subcellular location is the cytoplasm. It catalyses the reaction a ribonucleoside 5'-phosphate + H2O = a ribonucleoside + phosphate. Nucleotidase that shows phosphatase activity on nucleoside 5'-monophosphates. The protein is 5'-nucleotidase SurE of Xanthomonas campestris pv. campestris (strain 8004).